Here is a 248-residue protein sequence, read N- to C-terminus: Probable transcriptional regulatory protein RPA1097 (248 aa).

The interval 1-21 (MAGHSQFKNIMHRKGRQDAQR) is disordered.

The protein belongs to the TACO1 family.

The protein resides in the cytoplasm. This chain is Probable transcriptional regulatory protein RPA1097, found in Rhodopseudomonas palustris (strain ATCC BAA-98 / CGA009).